We begin with the raw amino-acid sequence, 753 residues long: Translation initiation factor IF-2 (753 aa).

The disordered stretch occupies residues 1-166; that stretch reads MSEKPRRDTG…PVMRPRGPVA (166 aa). 3 stretches are compositionally biased toward low complexity: residues 19-43, 71-81, and 102-122; these read STGQ…ATGA, NARPAAPANAR, and TPAP…TNTR. The span at 133 to 146 shows a compositional bias: basic and acidic residues; sequence PQPEEREREREAVL. Residues 153–162 are compositionally biased toward low complexity; that stretch reads TTTRPVMRPR. In terms of domain architecture, tr-type G spans 249–418; that stretch reads PRPPVVTIMG…LLVADLEDLR (170 aa). Residues 258 to 265 form a G1 region; it reads GHVDHGKT. A GTP-binding site is contributed by 258 to 265; it reads GHVDHGKT. The interval 283 to 287 is G2; it reads GITQH. The segment at 304-307 is G3; sequence DTPG. Residues 304 to 308 and 358 to 361 contribute to the GTP site; these read DTPGH and NKID. A G4 region spans residues 358-361; sequence NKID. The segment at 394 to 396 is G5; the sequence is SAR.

Belongs to the TRAFAC class translation factor GTPase superfamily. Classic translation factor GTPase family. IF-2 subfamily.

The protein localises to the cytoplasm. One of the essential components for the initiation of protein synthesis. Protects formylmethionyl-tRNA from spontaneous hydrolysis and promotes its binding to the 30S ribosomal subunits. Also involved in the hydrolysis of GTP during the formation of the 70S ribosomal complex. This is Translation initiation factor IF-2 from Chloroflexus aggregans (strain MD-66 / DSM 9485).